Consider the following 726-residue polypeptide: Ribonuclease R (726 aa).

Residues Arg262–Leu590 enclose the RNB domain. The region spanning Gly642–Tyr723 is the S1 motif domain.

This sequence belongs to the RNR ribonuclease family. RNase R subfamily. As to quaternary structure, monomer.

The protein resides in the cytoplasm. The enzyme catalyses Exonucleolytic cleavage in the 3'- to 5'-direction to yield nucleoside 5'-phosphates.. Its function is as follows. 3'-5' exoribonuclease that releases 5'-nucleoside monophosphates and is involved in maturation of structured RNAs. The chain is Ribonuclease R from Buchnera aphidicola subsp. Schizaphis graminum (strain Sg).